Consider the following 517-residue polypeptide: Pseudaminic acid cytidylyltransferase and UDP-2,4-diacetamido-2,4,6-trideoxy-beta-L-altropyranose hydrolase (517 aa).

The pseudaminic acid cytidylyltransferase stretch occupies residues 1-208 (MRAIAIVLAR…ELSPLEVQDI (208 aa)). A UDP-2,4-diacetamido-2,4,6-trideoxy-beta-L-altropyranose hydrolase region spans residues 209–517 (AHFRRFRISQ…EGALREFLEI (309 aa)). Histidine 244 (proton acceptor; for UDP-2,4-diacetamido-2,4,6-trideoxy-beta-L-altropyranose hydrolase activity) is an active-site residue.

This sequence in the N-terminal section; belongs to the CMP-NeuNAc synthase family. The protein in the C-terminal section; belongs to the PseG family. In terms of assembly, monomer. Mg(2+) serves as cofactor.

The enzyme catalyses UDP-2,4-diacetamido-2,4,6-trideoxy-beta-L-altrose + H2O = 2,4-diacetamido-2,4,6-trideoxy-beta-L-altrose + UDP + H(+). The catalysed reaction is pseudaminate + CTP = CMP-pseudaminate + diphosphate. In terms of biological role, catalyzes the fourth and sixth steps in the biosynthesis of pseudaminic acid, a sialic-acid-like sugar that is used to modify flagellin. The C-terminus mediates the fourth step of the pathway and catalyzes the removal of UDP from C-1 of UDP-2,4-diacetamido-2,4,6-trideoxy-beta-L-altropyranose forming 2,4-diacetamido-2,4,6-trideoxy-beta-L-altropyranose. The N-terminal part mediates the last step of the pathway by mediating activation of pseudaminic acid with CMP by forming CMP-pseudaminic acid. The protein is Pseudaminic acid cytidylyltransferase and UDP-2,4-diacetamido-2,4,6-trideoxy-beta-L-altropyranose hydrolase of Helicobacter pylori (strain ATCC 700392 / 26695) (Campylobacter pylori).